Here is a 161-residue protein sequence, read N- to C-terminus: Cyclic pyranopterin monophosphate synthase (161 aa).

Substrate-binding positions include 75 to 77 (MCH) and 115 to 116 (ME). Aspartate 130 is a catalytic residue.

It belongs to the MoaC family. In terms of assembly, homohexamer; trimer of dimers.

It catalyses the reaction (8S)-3',8-cyclo-7,8-dihydroguanosine 5'-triphosphate = cyclic pyranopterin phosphate + diphosphate. It participates in cofactor biosynthesis; molybdopterin biosynthesis. Functionally, catalyzes the conversion of (8S)-3',8-cyclo-7,8-dihydroguanosine 5'-triphosphate to cyclic pyranopterin monophosphate (cPMP). This chain is Cyclic pyranopterin monophosphate synthase, found in Bacillus cereus (strain ATCC 10987 / NRS 248).